The following is an 89-amino-acid chain: Large ribosomal subunit protein bL27 (89 aa).

Residues 1–22 (MAHKKGTGSTRNGRDSNAQRLG) are disordered. The span at 7 to 19 (TGSTRNGRDSNAQ) shows a compositional bias: polar residues.

Belongs to the bacterial ribosomal protein bL27 family.

The sequence is that of Large ribosomal subunit protein bL27 from Cyanothece sp. (strain PCC 7425 / ATCC 29141).